The primary structure comprises 354 residues: Small ribosomal subunit biogenesis GTPase RsgA 1 (354 aa).

Positions 1 to 24 (MAKKKKLTKGQVRRVRSNQQKRLK) are enriched in basic residues. Residues 1–28 (MAKKKKLTKGQVRRVRSNQQKRLKKQEE) are disordered. Residues 113–274 (YDGLKPVAAN…LIDSPGVREF (162 aa)) enclose the CP-type G domain. GTP-binding positions include 160-163 (NKVD) and 214-222 (GQSGVGKSS). Zn(2+) is bound by residues Cys298, Cys303, His305, and Cys311.

The protein belongs to the TRAFAC class YlqF/YawG GTPase family. RsgA subfamily. As to quaternary structure, monomer. Associates with 30S ribosomal subunit, binds 16S rRNA. Requires Zn(2+) as cofactor.

The protein localises to the cytoplasm. One of several proteins that assist in the late maturation steps of the functional core of the 30S ribosomal subunit. Helps release RbfA from mature subunits. May play a role in the assembly of ribosomal proteins into the subunit. Circularly permuted GTPase that catalyzes slow GTP hydrolysis, GTPase activity is stimulated by the 30S ribosomal subunit. The protein is Small ribosomal subunit biogenesis GTPase RsgA 1 of Vibrio parahaemolyticus serotype O3:K6 (strain RIMD 2210633).